A 545-amino-acid polypeptide reads, in one-letter code: Protein BTN1 (545 aa).

The interval 23 to 49 is disordered; the sequence is AHSSASDPRRTMVTNTSESPLASRQAT. The segment covering 34–49 has biased composition (polar residues); the sequence is MVTNTSESPLASRQAT. The next 5 helical transmembrane spans lie at 66–86, 97–117, 127–147, 205–225, and 234–254; these read AFFLFGLLNNSLYVVILTAAL, LVSFANIFPALIAKAIWPYFL, VWSCAALSFIGMLLVSFFPAL, VGWFASGTGAAGLIGAAAWWV, and GMAILSVLPAFMIMAYAIILP. The disordered stretch occupies residues 276–304; the sequence is TEDDAVERSSSDDQPTTANDDRQDSTIHI. A run of 3 helical transmembrane segments spans residues 322–342, 408–428, and 440–460; these read MALLKPMLQPYIIPLVIVYAM, LLWLPAVLQTGLLAVLLTESL, and LVIVLICVEGLAGGSAYVSVF.

It belongs to the battenin family.

The protein resides in the vacuole membrane. Its function is as follows. Involved in vacuolar transport and vacuole pH homeostasis. Also required for cytokinesis. This Mycosarcoma maydis (Corn smut fungus) protein is Protein BTN1 (BTN1).